We begin with the raw amino-acid sequence, 405 residues long: Putative arsenical pump-driving ATPase (405 aa).

8-15 (GKGGVGKT) is an ATP binding site.

It belongs to the arsA ATPase family.

It catalyses the reaction arsenite(in) + ATP + H2O = arsenite(out) + ADP + phosphate + H(+). In terms of biological role, anion-transporting ATPase. Catalyzes the extrusion of arsenite. This is Putative arsenical pump-driving ATPase from Prosthecochloris vibrioformis (Chlorobium vibrioforme).